Reading from the N-terminus, the 104-residue chain is uncharacterized protein (104 aa).

Positions V3–H104 constitute an HIT domain. Positions H93–H97 match the Histidine triad motif motif.

This is an uncharacterized protein from Helicobacter pylori (strain J99 / ATCC 700824) (Campylobacter pylori J99).